The following is a 256-amino-acid chain: BI1-like protein (256 aa).

The next 7 helical transmembrane spans lie at 53–73 (VYGILSAQLLLTTLISAVVVL), 85–105 (PGILLFLCIVPFILIWPLHIY), 113–133 (LILLALFTVSLSFTVGVSCAM), 138–158 (IVLQALILTLSVVGSLTAYTF), 167–187 (FSFLGPILFTSLIILVVTSFI), 189–209 (MFFPLGPTSVAVYGGFSALVF), and 228–248 (EYILASVALYLDILNLFLTIL).

It belongs to the BI1 family.

The protein resides in the membrane. This chain is BI1-like protein, found in Arabidopsis thaliana (Mouse-ear cress).